The primary structure comprises 216 residues: LexA repressor 1 (216 aa).

A DNA-binding region (H-T-H motif) is located at residues 38-58; that stretch reads TRQIGAAVGLRSMSSVARHLR. Catalysis depends on for autocatalytic cleavage activity residues Ser140 and Lys177.

This sequence belongs to the peptidase S24 family. In terms of assembly, homodimer.

The catalysed reaction is Hydrolysis of Ala-|-Gly bond in repressor LexA.. Its function is as follows. Represses a number of genes involved in the response to DNA damage (SOS response), including recA and lexA. In the presence of single-stranded DNA, RecA interacts with LexA causing an autocatalytic cleavage which disrupts the DNA-binding part of LexA, leading to derepression of the SOS regulon and eventually DNA repair. The protein is LexA repressor 1 of Nocardia farcinica (strain IFM 10152).